We begin with the raw amino-acid sequence, 354 residues long: CCN family member 3 (354 aa).

The signal sequence occupies residues 1-21; it reads MSLFLRKRCLCLGFLLFHLLS. An IGFBP N-terminal domain is found at 25–99; sequence ASLRCPSRCP…NNQTGICMVP (75 aa). Cystine bridges form between cysteine 29-cysteine 55, cysteine 33-cysteine 57, cysteine 37-cysteine 58, cysteine 44-cysteine 61, cysteine 69-cysteine 83, and cysteine 75-cysteine 96. The N-linked (GlcNAc...) asparagine glycan is linked to asparagine 91. The VWFC domain occupies 102-168; that stretch reads DNCVFDGVIY…GECCEKWTCG (67 aa). The TSP type-1 domain occupies 202–247; it reads NCIEQTTEWSACSKSCGMGVSTRVTNRNRQCEMVKQTRLCIVRPCE. A lipid anchor (S-palmitoyl cysteine) is attached at cysteine 241. 5 disulfides stabilise this stretch: cysteine 261/cysteine 298, cysteine 278/cysteine 312, cysteine 289/cysteine 328, cysteine 292/cysteine 330, and cysteine 297/cysteine 334. Residues 261 to 335 enclose the CTCK domain; it reads CLRTKKSLKA…GTCTCYSNCP (75 aa). The N-linked (GlcNAc...) asparagine glycan is linked to asparagine 277.

It belongs to the CCN family. In terms of assembly, interacts with FBLN1. Interacts (via CTCK domain) with NOTCH1 (via the EGF-like repeat region). Interacts with GJA1/CX43. Interacts with ITGA5:ITGB1, ITGAV:ITGB3 and ITGAV:ITGB5. Interacts with ZDHHC22; the interaction may lead to CCN3 palmitoylation. Post-translationally, may be palmitoylated on Cys-241, which is important for extracellular secretion. As to expression, expressed in large vessels including the ascending aorta, carotid arteries, and the thoracic aorta, in medium-sized vessels such as coronary arteries and small pulmonary veins and also in small vessels. In addition, also found to be present in the heart (at protein level). Expressed in astrocytes (at protein level). Detected in brain, bone, lung and muscle tissues. Expressed in skin, expression highly increases 5 days post-wounding, peaking on the 7th day to decline after 9 days. Expressed in pancreatic ducts and beta-cell islets. Expressed in the brain, in arcuate nucleus ESR1/KISS1 neurons, during lactation (at protein level).

It localises to the secreted. The protein localises to the cytoplasm. Its subcellular location is the cell junction. It is found in the gap junction. In terms of biological role, immediate-early protein playing a role in various cellular processes including proliferation, adhesion, migration, differentiation and survival. Acts by binding to integrins or membrane receptors such as NOTCH1. Essential regulator of hematopoietic stem and progenitor cell function. Inhibits myogenic differentiation through the activation of Notch-signaling pathway. Inhibits vascular smooth muscle cells proliferation by increasing expression of cell-cycle regulators such as CDKN2B or CDKN1A independently of TGFB1 signaling. Ligand of integrins ITGAV:ITGB3 and ITGA5:ITGB1, acts directly upon endothelial cells to stimulate pro-angiogenic activities and induces angiogenesis. In endothelial cells, supports cell adhesion, induces directed cell migration (chemotaxis) and promotes cell survival. Also plays a role in cutaneous wound healing acting as integrin receptor ligand. Supports skin fibroblast adhesion through ITGA5:ITGB1 and ITGA6:ITGB1 and induces fibroblast chemotaxis through ITGAV:ITGB5. Seems to enhance bFGF-induced DNA synthesis in fibroblasts. Involved in bone regeneration as a negative regulator. Enhances the articular chondrocytic phenotype, whereas it repressed the one representing endochondral ossification. Impairs pancreatic beta-cell function, inhibits beta-cell proliferation and insulin secretion. Plays a role as negative regulator of endothelial pro-inflammatory activation reducing monocyte adhesion, its anti-inflammatory effects occur secondary to the inhibition of NF-kappaB signaling pathway. Contributes to the control and coordination of inflammatory processes in atherosclerosis. Attenuates inflammatory pain through regulation of IL1B- and TNF-induced MMP9, MMP2 and CCL2 expression. Inhibits MMP9 expression through ITGB1 engagement. Brain osteoanabolic hormone. During lactation, maintains the maternal skeleton and viability of offspring. In this context, may act on osteochondral skeletal stem cells. The chain is CCN family member 3 (Ccn3) from Mus musculus (Mouse).